Here is a 213-residue protein sequence, read N- to C-terminus: Orotate phosphoribosyltransferase (213 aa).

Position 26 (K26) interacts with 5-phospho-alpha-D-ribose 1-diphosphate. Residue F34–F35 coordinates orotate. Residues Y72–K73, R99, K100, K103, H105, and D124–A132 each bind 5-phospho-alpha-D-ribose 1-diphosphate. T128 and R156 together coordinate orotate.

Belongs to the purine/pyrimidine phosphoribosyltransferase family. PyrE subfamily. In terms of assembly, homodimer. Mg(2+) serves as cofactor.

The catalysed reaction is orotidine 5'-phosphate + diphosphate = orotate + 5-phospho-alpha-D-ribose 1-diphosphate. It participates in pyrimidine metabolism; UMP biosynthesis via de novo pathway; UMP from orotate: step 1/2. Its function is as follows. Catalyzes the transfer of a ribosyl phosphate group from 5-phosphoribose 1-diphosphate to orotate, leading to the formation of orotidine monophosphate (OMP). This chain is Orotate phosphoribosyltransferase, found in Escherichia coli O127:H6 (strain E2348/69 / EPEC).